The primary structure comprises 418 residues: EQIMTNQMQGNKAQFNSQNQSNVMPGPAQIMRGPTPNMQGNMVQFTGQMSGQMLPQQGPVSNSPSQVMGIQGQVLRPPGPSPHMAQQHTDPATTANNDVNLSQMMPDVSMQQTSMVPPHVQSMQGNSASGSHFSGHGVSFNAPFGGAPNGTQMSCGQNPGFPVNKDVTLTSPLLVNLLQSDISAGHFGVNNKQNNTNANKQKKKKPPRKKKNCHQDLNTPDSRPAGLEEVDQQSLPGEQGINLDNTGPKLPDFSNRPPGYPTQPVEQRPLQQMPPQLMQHVAPPPQPPQQQPQPQLPQQQPQPQPPPPSQPQSQQQQQQQQQQQQQQMMMMLMMQQDPKSIRLPVSQNVHPPRGPLNPDSQRVPMQQSGNVPVMVSLQGPASVPPSPDKQRMPMPVNTPLGSNSRKMVYQESPQNSSS.

2 disordered regions span residues 1-21 and 77-98; these read EQIMTNQMQGNKAQFNSQNQS and PPGPSPHMAQQHTDPATTANND. The interval 1-215 is TBP/GTF2A-binding region; that stretch reads EQIMTNQMQG…PPRKKKNCHQ (215 aa). A CREBBP-binding region region spans residues 1-352; it reads EQIMTNQMQG…LPVSQNVHPP (352 aa). The interval 1 to 418 is NCOA1-binding region; that stretch reads EQIMTNQMQG…YQESPQNSSS (418 aa). The interval 60 to 214 is NCOA6IP-binding region; it reads VSNSPSQVMG…KPPRKKKNCH (155 aa). Over residues 84 to 98 the composition is skewed to polar residues; it reads MAQQHTDPATTANND. S171 is modified (phosphoserine). The LXXLL motif motif lies at 174-178; it reads LVNLL. The interval 186–418 is disordered; sequence HFGVNNKQNN…YQESPQNSSS (233 aa). Low complexity predominate over residues 190–199; sequence NNKQNNTNAN. Positions 200-212 are enriched in basic residues; that stretch reads KQKKKKPPRKKKN. A compositionally biased stretch (low complexity) spans 269–279; that stretch reads PLQQMPPQLMQ. Positions 282–310 are enriched in pro residues; sequence APPPQPPQQQPQPQLPQQQPQPQPPPPSQ. Low complexity predominate over residues 311–336; sequence PQSQQQQQQQQQQQQQQMMMMLMMQQ. Asymmetric dimethylarginine occurs at positions 342 and 353. The span at 358-370 shows a compositional bias: polar residues; it reads PDSQRVPMQQSGN. Residue R391 is modified to Asymmetric dimethylarginine. Residues 399 to 418 show a composition bias toward polar residues; that stretch reads PLGSNSRKMVYQESPQNSSS.

Monomer and homodimer. Interacts in vitro with the basal transcription factors GTF2A and TBP, suggesting an autonomous transactivation function. Interacts with NCOA1, CRSP3, RBM14, the histone acetyltransferase proteins EP300 and CREBBP, and with methyltransferase proteins NCOA6IP and PRMT2. Component of the MLL2/3 complex (also named ASCOM complex), at least composed of KMT2D/MLL2 or KMT2C/MLL3, ASH2L, RBBP5, WDR5, NCOA6, DPY30, KDM6A, PAXIP1/PTIP, PAGR1 and alpha- and beta-tubulin. Interacts with ZNF335; may enhance ligand-dependent transcriptional activation by nuclear hormone receptors. Phosphorylated.

The protein resides in the nucleus. Its function is as follows. Nuclear receptor coactivator that directly binds nuclear receptors and stimulates the transcriptional activities in a hormone-dependent fashion. Coactivate expression in an agonist- and AF2-dependent manner. May coactivate expression via a remodeling of chromatin and its interaction with histone acetyltransferase proteins. Involved in the coactivation of different nuclear receptors, such as for steroids (GR and ERs), retinoids (RARs and RXRs), thyroid hormone (TRs), vitamin D3 (VDR) and prostanoids (PPARs). Probably functions as a general coactivator, rather than just a nuclear receptor coactivator. May also be involved in the coactivation of the NF-kappa-B pathway. This chain is Nuclear receptor coactivator 6 (Ncoa6), found in Rattus norvegicus (Rat).